The chain runs to 745 residues: Poly(A) polymerase alpha (745 aa).

Residues 1–17 (MPFPVTTQGSQQTQPPQ) show a composition bias toward low complexity. A disordered region spans residues 1-22 (MPFPVTTQGSQQTQPPQKHYGI). Phosphoserine is present on residues Ser-10 and Ser-24. Residues 100 to 102 (FGS), Thr-109, 113 to 115 (DID), Asp-167, Lys-228, Tyr-237, and 246 to 247 (GV) contribute to the ATP site. Mg(2+) contacts are provided by Asp-113, Asp-115, and Asp-167. Residues Lys-444, Lys-445, Lys-506, and Lys-507 each participate in a glycyl lysine isopeptide (Lys-Gly) (interchain with G-Cter in SUMO) cross-link. Residues 490 to 507 (RKQLHQLLPNHVLQKKKK) carry the Nuclear localization signal 1 motif. The tract at residues 508 to 643 (HSTEGVKLTA…TSGNAATKIP (136 aa)) is ser/Thr-rich. Low complexity predominate over residues 523–534 (LDLSMDSDNSMS). Disordered stretches follow at residues 523–565 (LDLS…AVTA) and 577–704 (SVPQ…SETI). Residues 535–557 (VPSPTSATKTSPLNSSGSSQGRN) are compositionally biased toward polar residues. Phosphoserine is present on residues Ser-537 and Ser-558. 2 stretches are compositionally biased toward low complexity: residues 583-594 (SSESSGGTSSES) and 611-640 (TVSR…NAAT). Residues Lys-641 and Lys-650 each carry the N6-acetyllysine modification. A Nuclear localization signal 2 motif is present at residues 650–665 (KRTSSPHKEESPKKTK). 2 stretches are compositionally biased toward basic and acidic residues: residues 655 to 666 (PHKEESPKKTKT) and 682 to 692 (GHDKTEAKEQL). Residues 677-745 (CLALSGHDKT…KNSIKLRLNR (69 aa)) are required for interaction with NUDT21. Low complexity predominate over residues 694–704 (TETSTTQSETI). Position 736 is an N6-acetyllysine; alternate (Lys-736). Lys-736 is covalently cross-linked (Glycyl lysine isopeptide (Lys-Gly) (interchain with G-Cter in SUMO); alternate). Ser-738 is subject to Phosphoserine. Lys-740 is subject to N6-acetyllysine; alternate. Lys-740 participates in a covalent cross-link: Glycyl lysine isopeptide (Lys-Gly) (interchain with G-Cter in SUMO); alternate.

The protein belongs to the poly(A) polymerase family. Monomer. Found in a complex with CPSF1, FIP1L1 and PAPOLA. Interacts with AHCYL1 and FIP1L1; the interaction with AHCYL1 seems to increase interaction with FIP1L1. Interacts with NUDT21; the interaction is diminished by acetylation. Interacts with KPNB1; the interaction promotes PAP nuclear import and is inhibited by acetylation of PAP. The cofactor is Mg(2+). Mn(2+) serves as cofactor. In terms of processing, polysumoylated. Varying sumoylation depending on tissue- and cell-type. Highly sumoylated in bladder and NIH 3T3 cells. Sumoylation is required for nuclear localization and enhances PAP stability. Desumoylated by SENP1. Inhibits polymerase activity. Hyperphosphorylation on multiple CDK2 consensus and non-consensus sites in the C-terminal Ser/Thr-rich region represses PAP activity in late M-phase. Phosphorylation/dephosphorylation may regulate the interaction between PAP and CPSF. Post-translationally, acetylated in the C-terminus. Acetylation decreases interaction with NUDT21 and KPNB1, and inhibits nuclear localization through inhibiting binding to the importin alpha/beta complex.

The protein resides in the cytoplasm. Its subcellular location is the nucleus. The catalysed reaction is RNA(n) + ATP = RNA(n)-3'-adenine ribonucleotide + diphosphate. Its function is as follows. Polymerase that creates the 3'-poly(A) tail of mRNA's. Also required for the endoribonucleolytic cleavage reaction at some polyadenylation sites. May acquire specificity through interaction with a cleavage and polyadenylation specificity factor (CPSF) at its C-terminus. The protein is Poly(A) polymerase alpha (PAPOLA) of Homo sapiens (Human).